The following is a 392-amino-acid chain: Formate-dependent phosphoribosylglycinamide formyltransferase (392 aa).

N(1)-(5-phospho-beta-D-ribosyl)glycinamide contacts are provided by residues 22-23 and Glu-82; that span reads EL. ATP is bound by residues Arg-114, Lys-155, 160–165, 195–198, and Glu-203; these read SSGKGQ and EGVV. The ATP-grasp domain maps to 119-308; the sequence is RLAAEELQLP…EFALHVRAFL (190 aa). The Mg(2+) site is built by Glu-267 and Glu-279. N(1)-(5-phospho-beta-D-ribosyl)glycinamide-binding positions include Asp-286, Lys-355, and 362–363; that span reads RR.

The protein belongs to the PurK/PurT family. As to quaternary structure, homodimer.

It catalyses the reaction N(1)-(5-phospho-beta-D-ribosyl)glycinamide + formate + ATP = N(2)-formyl-N(1)-(5-phospho-beta-D-ribosyl)glycinamide + ADP + phosphate + H(+). It participates in purine metabolism; IMP biosynthesis via de novo pathway; N(2)-formyl-N(1)-(5-phospho-D-ribosyl)glycinamide from N(1)-(5-phospho-D-ribosyl)glycinamide (formate route): step 1/1. Functionally, involved in the de novo purine biosynthesis. Catalyzes the transfer of formate to 5-phospho-ribosyl-glycinamide (GAR), producing 5-phospho-ribosyl-N-formylglycinamide (FGAR). Formate is provided by PurU via hydrolysis of 10-formyl-tetrahydrofolate. The chain is Formate-dependent phosphoribosylglycinamide formyltransferase from Escherichia coli O1:K1 / APEC.